A 505-amino-acid polypeptide reads, in one-letter code: Phosphomevalonate kinase, peroxisomal (505 aa).

Ala-2 carries the N-acetylalanine modification. The short motif at 57–65 (DVKLTSPQL) is the Peroxisomal targeting signal PTS2 element. 177 to 187 (VAKTGLGSSAA) provides a ligand contact to ATP.

Belongs to the GHMP kinase family. Mevalonate kinase subfamily.

Its subcellular location is the peroxisome. The catalysed reaction is (R)-5-phosphomevalonate + ATP = (R)-5-diphosphomevalonate + ADP. The protein operates within isoprenoid biosynthesis; isopentenyl diphosphate biosynthesis via mevalonate pathway; isopentenyl diphosphate from (R)-mevalonate: step 2/3. In Arabidopsis thaliana (Mouse-ear cress), this protein is Phosphomevalonate kinase, peroxisomal.